The primary structure comprises 341 residues: S-adenosylmethionine:tRNA ribosyltransferase-isomerase (341 aa).

It belongs to the QueA family. In terms of assembly, monomer.

It is found in the cytoplasm. It catalyses the reaction 7-aminomethyl-7-carbaguanosine(34) in tRNA + S-adenosyl-L-methionine = epoxyqueuosine(34) in tRNA + adenine + L-methionine + 2 H(+). It participates in tRNA modification; tRNA-queuosine biosynthesis. Transfers and isomerizes the ribose moiety from AdoMet to the 7-aminomethyl group of 7-deazaguanine (preQ1-tRNA) to give epoxyqueuosine (oQ-tRNA). This is S-adenosylmethionine:tRNA ribosyltransferase-isomerase from Clostridium botulinum (strain Loch Maree / Type A3).